Consider the following 568-residue polypeptide: Hexose transporter 1 (568 aa).

The Cytoplasmic segment spans residues 1–32 (MATEEMREKSLKREAESLWDIPPESYASKACS). Residues 33 to 53 (CMGTAAQLVMVAVLGSFQFGF) form a helical membrane-spanning segment. Residues 54 to 86 (NLSALNTSKAFIILDFGWCKDENGGHYSDCDTG) lie on the Extracellular side of the membrane. Cys72 and Cys83 are joined by a disulfide. Residues 87 to 107 (LVYGSLINTAVFLGACVGCLL) traverse the membrane as a helical segment. Topologically, residues 108 to 119 (GGRLTDFGRRAS) are cytoplasmic. The chain crosses the membrane as a helical span at residues 120–140 (LIFTHCVCTLGCILSAAAEGF). Over 141 to 142 (PT) the chain is Extracellular. A helical transmembrane segment spans residues 143–163 (LLIARLVVGVAVGMFTVCVPM). Residues 164–182 (YLSEVTPDDRRGYFGTFHQ) lie on the Cytoplasmic side of the membrane. Gln182 provides a ligand contact to alpha-D-glucose. Gln182 contributes to the beta-D-glucose binding site. A helical transmembrane segment spans residues 183-203 (LFITLGIFFGTLLGLAFGNAP). Residues 204–220 (AGDEVYEVSTFQQAWWR) lie on the Extracellular side of the membrane. A helical membrane pass occupies residues 221 to 241 (VMLGLPAVVSLLAIWLLWFVF). Topologically, residues 242 to 306 (PFETPQYMVE…KAIVHPTYRS (65 aa)) are cytoplasmic. A helical transmembrane segment spans residues 307–327 (VILLACLLSIMQQFTGINVLV). 3 residues coordinate alpha-D-glucose: Gln318, Gln319, and Asn324. Gln318 serves as a coordination point for beta-D-glucose. Asn324 is a binding site for beta-D-glucose. The Extracellular segment spans residues 328-345 (ANSNNLYSSLKLPQDAVT). Residues 346 to 366 (GLTVGFTALNVFLTVITIPLV) form a helical membrane-spanning segment. Asn355 is a beta-D-glucose binding site. Residues 367–374 (DRLGRRTL) are Cytoplasmic-facing. Residues 375–395 (LLFSEAVMFVAMGIAFVANLV) traverse the membrane as a helical segment. Topologically, residues 396–406 (DQSNTAVQWVT) are extracellular. A helical membrane pass occupies residues 407–427 (VACVYVFIVGFAVGYGPVLWI). An alpha-D-glucose-binding site is contributed by Trp426. At 428 to 443 (YIHEIFPPEIKQGAAS) the chain is on the cytoplasmic side. A helical membrane pass occupies residues 444–464 (LASALNWVATVAIVLPSDFLL). At 465 to 469 (KQGFS) the chain is on the extracellular side. The chain crosses the membrane as a helical span at residues 470–490 (VFVGICTVALAIIFVVTFIFV). Topologically, residues 491–568 (KETKGLSIEE…DDLTKGTEVV (78 aa)) are cytoplasmic.

The protein belongs to the major facilitator superfamily. Sugar transporter (TC 2.A.1.1) family. Homodimer.

It localises to the cell membrane. The enzyme catalyses D-glucose(out) = D-glucose(in). It catalyses the reaction D-fructose(out) = D-fructose(in). The catalysed reaction is D-galactose(in) = D-galactose(out). It carries out the reaction D-mannose(out) = D-mannose(in). The enzyme catalyses D-glucosamine(out) = D-glucosamine(in). It catalyses the reaction D-xylose(out) = D-xylose(in). Inhibited by cytochalasin B. In terms of biological role, sodium-independent facilitative hexose transporter. Can transport D-glucose and D-mannose with high affinity, and D-fructose and D-galactose with low affinity. Can transport D-xylose and D-glucosamine. The polypeptide is Hexose transporter 1 (Toxoplasma gondii).